A 427-amino-acid chain; its full sequence is ETS domain-containing protein Elk-1 (427 aa).

A DNA-binding region (ETS) is located at residues 5–86; that stretch reads VTLWQFLLQL…SGQKFVYKFV (82 aa). 3 disordered regions span residues 116–146, 166–202, and 226–252; these read ATVH…GLAR, LQPQ…SPNP, and PNQK…VEGP. Glycyl lysine isopeptide (Lys-Gly) (interchain with G-Cter in SUMO) cross-links involve residues K229, K248, and K253. Polar residues predominate over residues 300 to 310; that stretch reads STSTTEITQPQ. Residues 300-350 form a disordered region; it reads STSTTEITQPQKGRKPRDLELPLSPSLLGGQGPERTPGSGTSSGLQAQGPA. S323 bears the Phosphoserine; by MAPK1 mark. Residues T335, T352, T362, and T367 each carry the phosphothreonine; by MAPK1 modification. A sufficient for interaction with MAD2L2 region spans residues 348-398; sequence GPALTPSLLPTHTLTPVLLTPSSLPPSIHFWSTLSPIAPRSPAKLSFQFPS. T380 is a glycosylation site (O-linked (GlcNAc) threonine). S382 carries the phosphoserine; by MAPK1 and MAPK8 modification. S388 bears the Phosphoserine; by MAPK1 mark. A Phosphothreonine; by MAPK1 modification is found at T416. S421 is modified (phosphoserine; by MAPK1).

Belongs to the ETS family. Interacts in its sumoylated form with PIAS2/PIASX which enhances its transcriptional activator activity. Interacts with MAD2L2; the interaction is direct and promotes phosphorylation by the kinases MAPK8 and/or MAPK9. Interacts with POU1F1. Post-translationally, sumoylation represses transcriptional activator activity as it results in recruitment of HDAC2 to target gene promoters which leads to decreased histone acetylation and reduced transactivator activity. It also regulates nuclear retention. On mitogenic stimulation, phosphorylated on C-terminal serine and threonine residues by MAPK1. Ser-382 and Ser-388 are the preferred sites for MAPK1. In vitro, phosphorylation by MAPK1 potentiates ternary complex formation with the serum responses factors, SRE and SRF. Also phosphorylated on Ser-382 by MAPK8 and/or MAKP9. Phosphorylation leads to loss of sumoylation and restores transcriptional activator activity. Phosphorylated and activated by CAMK4, MAPK11, MAPK12 and MAPK14. Upon bFGF stimulus, phosphorylated by PAK1. Phosphorylated by PRP4K at Thr-416; phosphorylation activation ELK1 transcriptional activity.

It localises to the nucleus. Transcription factor that binds to purine-rich DNA sequences. Forms a ternary complex with SRF and the ETS and SRF motifs of the serum response element (SRE) on the promoter region of immediate early genes such as FOS and IER2. Induces target gene transcription upon JNK and MAPK-signaling pathways stimulation. This chain is ETS domain-containing protein Elk-1, found in Rattus norvegicus (Rat).